The primary structure comprises 217 residues: Probable transaldolase (217 aa).

Catalysis depends on K83, which acts as the Schiff-base intermediate with substrate.

This sequence belongs to the transaldolase family. Type 3B subfamily.

The protein localises to the cytoplasm. It carries out the reaction D-sedoheptulose 7-phosphate + D-glyceraldehyde 3-phosphate = D-erythrose 4-phosphate + beta-D-fructose 6-phosphate. The protein operates within carbohydrate degradation; pentose phosphate pathway; D-glyceraldehyde 3-phosphate and beta-D-fructose 6-phosphate from D-ribose 5-phosphate and D-xylulose 5-phosphate (non-oxidative stage): step 2/3. Its function is as follows. Transaldolase is important for the balance of metabolites in the pentose-phosphate pathway. This is Probable transaldolase from Dinoroseobacter shibae (strain DSM 16493 / NCIMB 14021 / DFL 12).